The primary structure comprises 155 residues: uncharacterized protein (155 aa).

Positions 1 to 23 (MRLMRNLMNALLLGAAASSLAVA) are cleaved as a signal peptide. A disulfide bridge connects residues cysteine 86 and cysteine 91.

It belongs to the ivy family.

The protein resides in the periplasm. This is an uncharacterized protein from Pseudomonas aeruginosa (strain ATCC 15692 / DSM 22644 / CIP 104116 / JCM 14847 / LMG 12228 / 1C / PRS 101 / PAO1).